The primary structure comprises 248 residues: Probable uridine-cytidine kinase (248 aa).

ATP is bound at residue 15-23 (GGTSCGKST). Residues aspartate 73, tyrosine 101, arginine 154, arginine 164, and glutamine 172 each contribute to the substrate site. Aspartate 201 contributes to the ATP binding site. The disordered stretch occupies residues 224–248 (SDEEEEKENELVKQGSFRRPFSRPH).

Belongs to the uridine kinase family.

It carries out the reaction uridine + ATP = UMP + ADP + H(+). The catalysed reaction is cytidine + ATP = CMP + ADP + H(+). The protein operates within pyrimidine metabolism; CTP biosynthesis via salvage pathway; CTP from cytidine: step 1/3. It functions in the pathway pyrimidine metabolism; UMP biosynthesis via salvage pathway; UMP from uridine: step 1/1. This is Probable uridine-cytidine kinase from Caenorhabditis elegans.